Here is a 564-residue protein sequence, read N- to C-terminus: Bicarbonate transporter BicA (564 aa).

The Cytoplasmic portion of the chain corresponds to 1-11 (MQITNKIHFRN). A helical transmembrane segment spans residues 12–37 (LQGDLFGGVTAAVIALPMALAFGIAS). Topologically, residues 38–40 (GAG) are periplasmic. Residues 41–58 (ATAGLWGAVIVGFFAALF) form a helical membrane-spanning segment. Over 59–70 (GGTPTLISEPTG) the chain is Cytoplasmic. Thr69 contributes to the hydrogencarbonate binding site. A helical transmembrane segment spans residues 71 to 86 (PMTVVQTAVIASLVAA). At 87-90 (DPDN) the chain is on the periplasmic side. A helical transmembrane segment spans residues 91 to 112 (GLAMAFTVVMMAGLFQIAFGLL). The Cytoplasmic segment spans residues 113–122 (KLGKYVTMMP). Residues 123–145 (YTVISGFMSGIGIILVILQLAPF) form a helical membrane-spanning segment. The Periplasmic segment spans residues 146 to 170 (LGQASPKGGVIGTLQALPNLVSNVR). A helical membrane pass occupies residues 171–185 (PVETLLALMTVGIIW). At 186-196 (FMPSRWKKFAP) the chain is on the cytoplasmic side. The helical transmembrane segment at 197–211 (PQLVALVLGTIISIT) threads the bilayer. Residues 212-240 (LFGDLDIRRIGEIQAGLPALQLPVFQADQ) lie on the Periplasmic side of the membrane. A helical transmembrane segment spans residues 241–269 (LQRMLIDAAVLGMLGCIDALLTSVVADSL). Na(+) contacts are provided by Asp258 and Thr262. At 270 to 275 (TRTEHN) the chain is on the cytoplasmic side. The chain crosses the membrane as a helical span at residues 276–292 (SNKELVGQGIGNVMSGL). Residues 293–302 (FGGLGGAGAT) are Periplasmic-facing. Position 300 (Gly300) interacts with Na(+). Position 301 (Ala301) interacts with hydrogencarbonate. A Na(+)-binding site is contributed by Thr302. A helical membrane pass occupies residues 303–312 (MGTVVNIQSG). Topologically, residues 313-315 (GRT) are cytoplasmic. The helical transmembrane segment at 316–338 (ALSGLIRAMVLLVVILGAAKLAA) threads the bilayer. Over 339–341 (TIP) the chain is Periplasmic. A helical transmembrane segment spans residues 342–357 (LAVLAGIAFKVGVDII). Residues 358–369 (DWGFLKRAHHVS) are Cytoplasmic-facing. Residues 370–390 (IKGALIMYAVIVLTVLVDLIA) traverse the membrane as a helical segment. Over 391-392 (AV) the chain is Periplasmic. The helical transmembrane segment at 393–405 (GIGVFIANILTID) threads the bilayer. Residues 406–564 (RMSALQSKAV…PSSSSVQTTY (159 aa)) lie on the Cytoplasmic side of the membrane. The region spanning 432-542 (KRWLDEGNGR…DDRSEALKDA (111 aa)) is the STAS domain.

Belongs to the SLC26A/SulP transporter (TC 2.A.53) family. As to quaternary structure, forms homodimers through the STAS cytoplasmic domain.

It is found in the cell inner membrane. Its function is as follows. Low affinity, high-flux Na(+)-dependent bicarbonate transporter. Involved in carbone dioxide-concentrating mechanisms (CCMs) that accumulate CO(2) and improve photosynthetic carbon fixation. In Synechocystis sp. (strain ATCC 27184 / PCC 6803 / Kazusa), this protein is Bicarbonate transporter BicA.